The sequence spans 295 residues: MAHQLLCCEVETIRRAYPDANLLNDRVLRAMLKAEETCAPSVSYFKCVQKEILPSMRKIVATWMLEVCEEQKCEEEVFPLAMNYLNRFLSLEPVKKSRLQLLGATCMFVASKMKETIPLTAEKLCIYTDNSIRPDELLQMELLLVNKLKWNLAAMTPHDFIEHFLSKMPVAEENKQIIRKHAQTFVALCATDVKFISNPPSMVAAGSVVAAVQGLHLGSSNSFLSYHRLTRFLSKVIKCDADCLRACQEQIEALLESSLRQAQQQSLDPKAAEEEEEEEEADLACTPTDVRDVNI.

The Cyclin N-terminal domain occupies 28 to 152 (LRAMLKAEET…LLVNKLKWNL (125 aa)). The segment at 264-295 (QQSLDPKAAEEEEEEEEADLACTPTDVRDVNI) is disordered. A Glycyl lysine isopeptide (Lys-Gly) (interchain with G-Cter in ubiquitin) cross-link involves residue Lys-270. Over residues 273-282 (EEEEEEEEAD) the composition is skewed to acidic residues. At Thr-286 the chain carries Phosphothreonine.

It belongs to the cyclin family. Cyclin D subfamily. As to quaternary structure, interacts with either CDK4 or CDK6 protein kinase to form a serine/threonine kinase holoenzyme complex. The cyclin subunit imparts substrate specificity to the complex. Component of the ternary complex CCND1/CDK4/CDKN1B required for nuclear translocation and modulation of CDK4-mediated kinase activity. Interacts directly with CDKN1B. Can form similar complexes with either CDKN1A or CDKN2A. Interacts with UHRF2; the interaction ubiquitinates CCND1 and appears to occur independently of phosphorylation. Interacts with USP2. Interacts (via cyclin N-terminal domain) with INSM1 (via N-terminal region); the interaction competes with the binding of CCND1 to CDK4 during cell cycle progression and inhibits CDK4 activity. Interacts with CDK4; the interaction is prevented with the binding of CCND1 to INSM1 during cell cycle progression. In terms of processing, phosphorylation at Thr-286 by MAP kinases is required for ubiquitination and degradation by the DCX(AMBRA1) complex. It also plays an essential role for recognition by the FBXO31 component of SCF (SKP1-cullin-F-box) protein ligase complex following DNA damage. Post-translationally, ubiquitinated at Lys-270 by the DCX(AMBRA1) complex during the transition from G1 to S cell phase, leading to its degradation: ubiquitination is dependent on Thr-286 phosphorylation. The DCX(AMBRA1) complex represents the major regulator of CCND1 stability during the G1/S transition. Also ubiquitinated by the SCF(FBXO4) and Cul7-RING(FBXW8) ubiquitin-protein ligase complexes. Following DNA damage it is ubiquitinated by the SCF(FBXO31) protein ligase complex. SCF(FBXO31) ubiquitination is dependent on Thr-286 phosphorylation. Ubiquitinated also by UHRF2 apparently in a phosphorylation-independent manner. Ubiquitination leads to its degradation and G1 arrest. Deubiquitinated by USP2; leading to its stabilization.

It is found in the nucleus. Its subcellular location is the cytoplasm. The protein resides in the nucleus membrane. In terms of biological role, regulatory component of the cyclin D1-CDK4 (DC) complex that phosphorylates and inhibits members of the retinoblastoma (RB) protein family including RB1 and regulates the cell-cycle during G(1)/S transition. Phosphorylation of RB1 allows dissociation of the transcription factor E2F from the RB/E2F complex and the subsequent transcription of E2F target genes which are responsible for the progression through the G(1) phase. Hypophosphorylates RB1 in early G(1) phase. Cyclin D-CDK4 complexes are major integrators of various mitogenenic and antimitogenic signals. Also a substrate for SMAD3, phosphorylating SMAD3 in a cell-cycle-dependent manner and repressing its transcriptional activity. Component of the ternary complex, cyclin D1/CDK4/CDKN1B, required for nuclear translocation and activity of the cyclin D-CDK4 complex. Exhibits transcriptional corepressor activity with INSM1 on the NEUROD1 and INS promoters in a cell cycle-independent manner. In Canis lupus familiaris (Dog), this protein is G1/S-specific cyclin-D1 (CCND1).